A 333-amino-acid polypeptide reads, in one-letter code: Dihydroorotate dehydrogenase (quinone) (333 aa).

Residues 56–60 (AGLDK) and Thr-80 contribute to the FMN site. Lys-60 lines the substrate pocket. 105 to 109 (NRMGF) is a binding site for substrate. Positions 133 and 166 each coordinate FMN. Asn-166 contacts substrate. The Nucleophile role is filled by Ser-169. Asn-171 provides a ligand contact to substrate. 2 residues coordinate FMN: Lys-211 and Thr-239. 240–241 (NT) is a binding site for substrate. FMN is bound by residues Gly-262, Gly-291, and 312 to 313 (YS).

This sequence belongs to the dihydroorotate dehydrogenase family. Type 2 subfamily. As to quaternary structure, monomer. Requires FMN as cofactor.

The protein localises to the cell membrane. The catalysed reaction is (S)-dihydroorotate + a quinone = orotate + a quinol. It functions in the pathway pyrimidine metabolism; UMP biosynthesis via de novo pathway; orotate from (S)-dihydroorotate (quinone route): step 1/1. Its function is as follows. Catalyzes the conversion of dihydroorotate to orotate with quinone as electron acceptor. The sequence is that of Dihydroorotate dehydrogenase (quinone) from Legionella pneumophila (strain Corby).